The following is a 107-amino-acid chain: UPF0145 protein PM1668 (107 aa).

This sequence belongs to the UPF0145 family.

This is UPF0145 protein PM1668 from Pasteurella multocida (strain Pm70).